Here is a 276-residue protein sequence, read N- to C-terminus: Probable endonuclease 4 (276 aa).

Histidine 70, histidine 108, glutamate 144, aspartate 177, histidine 180, histidine 211, aspartate 224, histidine 226, and glutamate 256 together coordinate Zn(2+).

This sequence belongs to the AP endonuclease 2 family. Zn(2+) is required as a cofactor.

The enzyme catalyses Endonucleolytic cleavage to 5'-phosphooligonucleotide end-products.. Endonuclease IV plays a role in DNA repair. It cleaves phosphodiester bonds at apurinic or apyrimidinic (AP) sites, generating a 3'-hydroxyl group and a 5'-terminal sugar phosphate. In Metamycoplasma arthritidis (strain 158L3-1) (Mycoplasma arthritidis), this protein is Probable endonuclease 4.